The primary structure comprises 603 residues: Elongation factor 4 (603 aa).

Residues 7 to 191 (DNIRNFSIVA…AIVTRLPPPK (185 aa)) form the tr-type G domain. Residues 19 to 24 (DHGKST) and 138 to 141 (NKVD) contribute to the GTP site.

It belongs to the TRAFAC class translation factor GTPase superfamily. Classic translation factor GTPase family. LepA subfamily.

Its subcellular location is the cell inner membrane. The catalysed reaction is GTP + H2O = GDP + phosphate + H(+). Required for accurate and efficient protein synthesis under certain stress conditions. May act as a fidelity factor of the translation reaction, by catalyzing a one-codon backward translocation of tRNAs on improperly translocated ribosomes. Back-translocation proceeds from a post-translocation (POST) complex to a pre-translocation (PRE) complex, thus giving elongation factor G a second chance to translocate the tRNAs correctly. Binds to ribosomes in a GTP-dependent manner. The sequence is that of Elongation factor 4 from Rhodopseudomonas palustris (strain ATCC BAA-98 / CGA009).